The following is a 671-amino-acid chain: Probable boron transporter 6 (671 aa).

Over M1–R37 the chain is Cytoplasmic. The chain crosses the membrane as a helical span at residues I38–E58. Topologically, residues Q59 to T77 are extracellular. Residues S78–A98 traverse the membrane as a helical segment. Residues E99 to Y123 are Cytoplasmic-facing. The chain crosses the membrane as a helical span at residues L124 to F144. Residues N145–A157 lie on the Extracellular side of the membrane. The helical transmembrane segment at G158–I178 threads the bilayer. The Cytoplasmic portion of the chain corresponds to S179–H195. Residues F196 to T216 traverse the membrane as a helical segment. At A217 to S235 the chain is on the extracellular side. Residues F236–V256 traverse the membrane as a helical segment. The Cytoplasmic segment spans residues P257–V291. The helical transmembrane segment at P292–F312 threads the bilayer. Over D313–S332 the chain is Extracellular. A helical transmembrane segment spans residues A333 to L353. Over P354 to S469 the chain is Cytoplasmic. A helical membrane pass occupies residues V470–L490. At W491–G557 the chain is on the extracellular side. Residues M558–I578 form a helical membrane-spanning segment. The Cytoplasmic portion of the chain corresponds to R579–H671.

This sequence belongs to the anion exchanger (TC 2.A.31.3) family.

The protein localises to the membrane. Probable boron transporter. Boron is essential for maintaining the integrity of plants cell walls. This Arabidopsis thaliana (Mouse-ear cress) protein is Probable boron transporter 6 (BOR6).